The primary structure comprises 451 residues: uncharacterized protein (451 aa).

The region spanning 50 to 147 is the HD domain; the sequence is RFEHSLGTMF…DVDADRMDYL (98 aa).

This is an uncharacterized protein from Methanocaldococcus jannaschii (strain ATCC 43067 / DSM 2661 / JAL-1 / JCM 10045 / NBRC 100440) (Methanococcus jannaschii).